The sequence spans 251 residues: Haloacid dehalogenase-like hydrolase domain-containing protein 3 (251 aa).

Lys15 is modified (N6-acetyllysine; alternate). Lys15 carries the post-translational modification N6-succinyllysine; alternate. The residue at position 130 (Lys130) is an N6-acetyllysine.

It belongs to the HAD-like hydrolase superfamily.

In Mus musculus (Mouse), this protein is Haloacid dehalogenase-like hydrolase domain-containing protein 3 (Hdhd3).